Here is a 187-residue protein sequence, read N- to C-terminus: MVRYSASPALETKCAKARGAYLRTHFKNSREVAFTINGMSLKKAFIFLDNVKEHKQAVPFRRFNGGVGRTAQGKEFGVTQARWPVKSVKFFYDLLKNAEANAEAKGLDMDKLIIKHVQVNAAPKQRRRTYRAHGRVTAYLSSPSHIEIIVAEEEEAVPKANDTVSRVSLKQGAKARNLAARKAITAA.

Belongs to the universal ribosomal protein uL22 family. As to quaternary structure, component of the large ribosomal subunit (LSU). Mature yeast ribosomes consist of a small (40S) and a large (60S) subunit. The 40S small subunit contains 1 molecule of ribosomal RNA (18S rRNA) and at least 33 different proteins. The large 60S subunit contains 3 rRNA molecules (25S, 5.8S and 5S rRNA) and at least 46 different proteins. uL22 is associated with the polypeptide exit tunnel.

It localises to the cytoplasm. Functionally, component of the ribosome, a large ribonucleoprotein complex responsible for the synthesis of proteins in the cell. The small ribosomal subunit (SSU) binds messenger RNAs (mRNAs) and translates the encoded message by selecting cognate aminoacyl-transfer RNA (tRNA) molecules. The large subunit (LSU) contains the ribosomal catalytic site termed the peptidyl transferase center (PTC), which catalyzes the formation of peptide bonds, thereby polymerizing the amino acids delivered by tRNAs into a polypeptide chain. The nascent polypeptides leave the ribosome through a tunnel in the LSU and interact with protein factors that function in enzymatic processing, targeting, and the membrane insertion of nascent chains at the exit of the ribosomal tunnel. In Schizosaccharomyces pombe (strain 972 / ATCC 24843) (Fission yeast), this protein is Large ribosomal subunit protein uL22A (rpl1701).